The chain runs to 231 residues: Cytidylate kinase (231 aa).

18 to 26 (GPSGTGKSS) is a binding site for ATP.

Belongs to the cytidylate kinase family. Type 1 subfamily.

The protein resides in the cytoplasm. It catalyses the reaction CMP + ATP = CDP + ADP. The enzyme catalyses dCMP + ATP = dCDP + ADP. This Streptomyces avermitilis (strain ATCC 31267 / DSM 46492 / JCM 5070 / NBRC 14893 / NCIMB 12804 / NRRL 8165 / MA-4680) protein is Cytidylate kinase.